Reading from the N-terminus, the 203-residue chain is Sec-independent protein translocase protein TatB (203 aa).

The helical transmembrane segment at 1–21 (MFDIGWTELLVIAVVLIVVVG) threads the bilayer. The tract at residues 179 to 203 (KPKRTTAVRKPATLKKPAQTKKDEA) is disordered.

Belongs to the TatB family. As to quaternary structure, the Tat system comprises two distinct complexes: a TatABC complex, containing multiple copies of TatA, TatB and TatC subunits, and a separate TatA complex, containing only TatA subunits. Substrates initially bind to the TatABC complex, which probably triggers association of the separate TatA complex to form the active translocon.

It is found in the cell inner membrane. Its function is as follows. Part of the twin-arginine translocation (Tat) system that transports large folded proteins containing a characteristic twin-arginine motif in their signal peptide across membranes. Together with TatC, TatB is part of a receptor directly interacting with Tat signal peptides. TatB may form an oligomeric binding site that transiently accommodates folded Tat precursor proteins before their translocation. The polypeptide is Sec-independent protein translocase protein TatB (Rhizobium johnstonii (strain DSM 114642 / LMG 32736 / 3841) (Rhizobium leguminosarum bv. viciae)).